The following is a 1247-amino-acid chain: F-box/WD repeat-containing protein A (1247 aa).

One can recognise an START domain in the interval 1-214 (MQYVNGNDIS…PATVSGRLAK (214 aa)). 2 disordered regions span residues 484–514 (GNKD…DNII) and 552–576 (QQPQ…KEIK). Over residues 552–566 (QQPQQQQQQPQEQQQ) the composition is skewed to low complexity. An F-box domain is found at 631 to 677 (NSGFDNLPEEVVQIIFSNLSAINIVNLSLVCKRFKMATDSPILWKNL). Disordered regions lie at residues 697 to 744 (SNLS…QQQQ) and 833 to 856 (GQES…KRDN). Composition is skewed to low complexity over residues 707–719 (NSNS…GSSS) and 726–744 (QQQN…QQQQ). Over residues 833-846 (GQESPINKNSSDNP) the composition is skewed to polar residues. 7 WD repeats span residues 895 to 934 (GHNR…GDYE), 945 to 984 (DHTQ…IEVI), 988 to 1025 (RPTN…LLWN), 1029 to 1073 (AHTK…CINT), 1076 to 1114 (GHSY…TFIS), 1119 to 1158 (KHTG…LSNI), and 1218 to 1247 (NHES…RWDF).

Component of an SCF complex including at least culA. Formation of this complex appears to require activity of the MAP kinase erk2. Interacts with regA.

Its function is as follows. Substrate recognition component of a SCF (SKP1-CUL1-F-box protein) E3 ubiquitin-protein ligase complex which mediates the ubiquitination and subsequent proteasomal degradation of target proteins. May target the cAMP phosphodiesterase regA for degradation leading to an increase in cAMP and PKA activity. Promotes development of prestalk cells as opposed to prespores within the developing fruiting body. Required for culmination and fruiting body development. This Dictyostelium discoideum (Social amoeba) protein is F-box/WD repeat-containing protein A (fbxA).